The following is an 865-amino-acid chain: DNA topoisomerase 3-beta (865 aa).

The Toprim domain maps to 6–151 (RVLMVAEKPS…KVYRARFSSV (146 aa)). The Mg(2+) site is built by E12, D116, and D118. The Topo IA-type catalytic domain occupies 167–587 (NRDEALAVDA…HVIQQFRRKF (421 aa)). Positions 209-214 (SYGPCQ) are interaction with DNA. Y331 (O-(5'-phospho-DNA)-tyrosine intermediate) is an active-site residue. The segment covering 833-853 (RRGGRGRGRGRGRGRGGRRGS) has biased composition (basic residues). The segment at 833-865 (RRGGRGRGRGRGRGRGGRRGSKSVDPKMSFRDF) is disordered. Over residues 854-865 (KSVDPKMSFRDF) the composition is skewed to basic and acidic residues.

The protein belongs to the type IA topoisomerase family. The cofactor is Mg(2+).

The enzyme catalyses ATP-independent breakage of single-stranded DNA, followed by passage and rejoining.. Releases the supercoiling and torsional tension of DNA introduced during the DNA replication and transcription by transiently cleaving and rejoining one strand of the DNA duplex. Introduces a single-strand break via transesterification at a target site in duplex DNA. The scissile phosphodiester is attacked by the catalytic tyrosine of the enzyme, resulting in the formation of a DNA-(5'-phosphotyrosyl)-enzyme intermediate and the expulsion of a 3'-OH DNA strand. The free DNA strand than undergoes passage around the unbroken strand thus removing DNA supercoils. Finally, in the religation step, the DNA 3'-OH attacks the covalent intermediate to expel the active-site tyrosine and restore the DNA phosphodiester backbone. The polypeptide is DNA topoisomerase 3-beta (Arabidopsis thaliana (Mouse-ear cress)).